We begin with the raw amino-acid sequence, 1383 residues long: DNA-directed RNA polymerase subunit beta'' (1383 aa).

Residues Cys220, Cys289, Cys296, and Cys299 each coordinate Zn(2+).

It belongs to the RNA polymerase beta' chain family. RpoC2 subfamily. In terms of assembly, in plastids the minimal PEP RNA polymerase catalytic core is composed of four subunits: alpha, beta, beta', and beta''. When a (nuclear-encoded) sigma factor is associated with the core the holoenzyme is formed, which can initiate transcription. Zn(2+) serves as cofactor.

It is found in the plastid. Its subcellular location is the chloroplast. It catalyses the reaction RNA(n) + a ribonucleoside 5'-triphosphate = RNA(n+1) + diphosphate. DNA-dependent RNA polymerase catalyzes the transcription of DNA into RNA using the four ribonucleoside triphosphates as substrates. The polypeptide is DNA-directed RNA polymerase subunit beta'' (Oenothera argillicola (Appalachian evening primrose)).